Consider the following 275-residue polypeptide: Formamidopyrimidine-DNA glycosylase (275 aa).

Residue Pro-2 is the Schiff-base intermediate with DNA of the active site. Glu-3 functions as the Proton donor in the catalytic mechanism. Residue Lys-58 is the Proton donor; for beta-elimination activity of the active site. Positions 93, 111, and 156 each coordinate DNA. Residues 241–275 (FAYDRAGLPCRVCGTPIRQIVQGQRSTYFCPTCQR) form an FPG-type zinc finger. Arg-265 functions as the Proton donor; for delta-elimination activity in the catalytic mechanism.

The protein belongs to the FPG family. As to quaternary structure, monomer. Zn(2+) is required as a cofactor.

The enzyme catalyses Hydrolysis of DNA containing ring-opened 7-methylguanine residues, releasing 2,6-diamino-4-hydroxy-5-(N-methyl)formamidopyrimidine.. The catalysed reaction is 2'-deoxyribonucleotide-(2'-deoxyribose 5'-phosphate)-2'-deoxyribonucleotide-DNA = a 3'-end 2'-deoxyribonucleotide-(2,3-dehydro-2,3-deoxyribose 5'-phosphate)-DNA + a 5'-end 5'-phospho-2'-deoxyribonucleoside-DNA + H(+). Its function is as follows. Involved in base excision repair of DNA damaged by oxidation or by mutagenic agents. Acts as a DNA glycosylase that recognizes and removes damaged bases. Has a preference for oxidized purines, such as 7,8-dihydro-8-oxoguanine (8-oxoG). Has AP (apurinic/apyrimidinic) lyase activity and introduces nicks in the DNA strand. Cleaves the DNA backbone by beta-delta elimination to generate a single-strand break at the site of the removed base with both 3'- and 5'-phosphates. The chain is Formamidopyrimidine-DNA glycosylase from Burkholderia vietnamiensis (strain G4 / LMG 22486) (Burkholderia cepacia (strain R1808)).